We begin with the raw amino-acid sequence, 242 residues long: Ribonuclease 3 (242 aa).

An RNase III domain is found at 10-146 (LQNFNKKFAD…FVGALYLDQG (137 aa)). Residue E59 coordinates Mg(2+). The active site involves D63. Mg(2+) is bound by residues D132 and E135. Residue E135 is part of the active site. Residues 172–241 (DFKTQFQELI…AEKAYNDMKK (70 aa)) form the DRBM domain. The disordered stretch occupies residues 216–242 (VAKGQGRTKKESEQKAAEKAYNDMKKK). Residues 223–242 (TKKESEQKAAEKAYNDMKKK) show a composition bias toward basic and acidic residues.

Belongs to the ribonuclease III family. Homodimer. Mg(2+) serves as cofactor.

The protein resides in the cytoplasm. The catalysed reaction is Endonucleolytic cleavage to 5'-phosphomonoester.. In terms of biological role, digests double-stranded RNA. Involved in the processing of primary rRNA transcript to yield the immediate precursors to the large and small rRNAs (23S and 16S). Processes some mRNAs, and tRNAs when they are encoded in the rRNA operon. Processes pre-crRNA and tracrRNA of type II CRISPR loci if present in the organism. The polypeptide is Ribonuclease 3 (Staphylococcus carnosus (strain TM300)).